Here is a 206-residue protein sequence, read N- to C-terminus: Two-component response regulator ARR7 (206 aa).

In terms of domain architecture, Response regulatory spans 25–152; sequence HVLAVDDSIV…DVKRIKQLIM (128 aa). Aspartate 85 carries the 4-aspartylphosphate modification. The interval 165–206 is disordered; sequence SNKRKLQEDSDTSSSSHDDTSIKDSSCSKRMKSESENLFSLL.

It belongs to the ARR family. Type-A subfamily. In terms of processing, two-component system major event consists of a His-to-Asp phosphorelay between a sensor histidine kinase (HK) and a response regulator (RR). In plants, the His-to-Asp phosphorelay involves an additional intermediate named Histidine-containing phosphotransfer protein (HPt). This multistep phosphorelay consists of a His-Asp-His-Asp sequential transfer of a phosphate group between first a His and an Asp of the HK protein, followed by the transfer to a conserved His of the HPt protein and finally the transfer to an Asp in the receiver domain of the RR protein. Predominantly expressed in roots and young flowers.

It is found in the nucleus. Functionally, functions as a response regulator involved in His-to-Asp phosphorelay signal transduction system. Phosphorylation of the Asp residue in the receiver domain activates the ability of the protein to promote the transcription of target genes. Type-A response regulators seem to act as negative regulators of the cytokinin signaling. This is Two-component response regulator ARR7 (ARR7) from Arabidopsis thaliana (Mouse-ear cress).